The following is an 803-amino-acid chain: H(+)/Cl(-) exchange transporter 7 (803 aa).

The tract at residues 1-46 is disordered; the sequence is MANVSKKVSWSGRDRDDEEGAPLLRRTGQPDEETPLLNGAGPGARQ. The Cytoplasmic portion of the chain corresponds to 1-124; it reads MANVSKKVSW…TAFRTVEIKR (124 aa). Ser9 bears the Phosphoserine mark. The next 2 helical transmembrane spans lie at 125-157 and 172-195; these read WVICALIGILTGLVACFIDIVVENLAGLKYRVI and FSLLLWATLNSAFVLVGSVIVAFI. The Selectivity filter part_1 motif lies at 201–205; it reads GSGIP. Chloride is bound at residue Ser202. An intramembrane region (helical) is located at residues 204 to 211; the sequence is IPQIKCFL. Transmembrane regions (helical) follow at residues 221–239 and 245–262; these read RLKTLVIKVSGVILSVVGG and EGPMIHSGSVIAAGISQG. A Selectivity filter part_2 motif is present at residues 243 to 247; sequence GKEGP. 2 consecutive intramembrane regions (helical) follow at residues 286–298 and 302–310; these read FVSAGAAAGVSAA and PVGGVLFSL. Helical transmembrane passes span 320–339, 373–403, 408–430, 485–505, and 510–533; these read FLTWRIFFASMISTFTLNFV, IPVFIAMGVVGGILGAVFNALNYWLTMFRIR, PCLQVIEAMLVAAVTATVAFVLI, PMTLGLFTLVYFFLACWTYGL, and GVFIPSLLIGAAWGRLFGISLSYL. A Selectivity filter part_3 motif is present at residues 510-514; that stretch reads GVFIP. Residue Phe512 participates in chloride binding. The segment at residues 543 to 557 is an intramembrane region (helical); sequence GKYALMGAAAQLGGI. An intramembrane region (note=Loop between two helices) is located at residues 558–560; it reads VRM. The segment at residues 561 to 572 is an intramembrane region (helical); that stretch reads TLSLTVIMMEAT. Residues 573-576 constitute an intramembrane region (note=Loop between two helices); it reads SNVT. Residues 577 to 595 form a helical membrane-spanning segment; sequence YGFPIMLVLMTAKIVGDVF. Residues 596 to 803 are Cytoplasmic-facing; the sequence is IEGLYDMHIQ…GLEELSLAQT (208 aa). Tyr600 lines the chloride pocket. CBS domains lie at 629 to 693 and 739 to 797; these read MSTP…VFVE and MNPS…GLEE. Residues 656–658 and 781–784 contribute to the ATP site; these read HNG and TRKD. A Phosphoserine modification is found at Ser799.

It belongs to the chloride channel (TC 2.A.49) family. ClC-7/CLCN7 subfamily. In terms of assembly, chloride channel 7 are heteromers of alpha (CLCN7) and beta (OSTM1) subunits. In terms of tissue distribution, liver, spleen, kidneys and brain.

The protein resides in the lysosome membrane. It catalyses the reaction 2 chloride(in) + H(+)(out) = 2 chloride(out) + H(+)(in). Functionally, slowly voltage-gated channel mediating the exchange of chloride ions against protons. Functions as antiporter and contributes to the acidification of the lysosome lumen and may be involved in maintaining lysosomal pH. The CLC channel family contains both chloride channels and proton-coupled anion transporters that exchange chloride or another anion for protons. The presence of conserved gating glutamate residues is typical for family members that function as antiporters. This Mus musculus (Mouse) protein is H(+)/Cl(-) exchange transporter 7.